The primary structure comprises 604 residues: Microtubule-associated protein 70-4 (604 aa).

Residues 1–33 (MEERGFMSPSLAISASYREGGSKGMSRRRSMRP) are disordered. Residues 49–351 (DPVRIELNRL…ADRAAKSEAQ (303 aa)) adopt a coiled-coil conformation. A required for targeting to microtubules region spans residues 233-470 (IIDKMHRQKV…PLNHKSSEGT (238 aa)). 2 disordered regions span residues 367-422 (LKGP…RSLT) and 434-495 (GTSR…NDSV). Over residues 371–385 (TSSSSRGTSVGRSSS) the composition is skewed to low complexity. Polar residues-rich tracts occupy residues 401–422 (PKIT…RSLT) and 468–478 (EGTSRGESPSS). Residues 521 to 569 (LRDKDEAIEMLAKKVETLTKAMDVEAKKMRREVAVMGKEVAAMRVVDKG) adopt a coiled-coil conformation.

It belongs to the MAP70 family.

The protein localises to the cytoplasm. It localises to the cytoskeleton. Functionally, plant-specific protein that interact with microtubules. The protein is Microtubule-associated protein 70-4 (MAP70.4) of Arabidopsis thaliana (Mouse-ear cress).